We begin with the raw amino-acid sequence, 945 residues long: Netrin receptor UNC5B (945 aa).

The signal sequence occupies residues 1-26 (MRARSGARGALLLALLLCWDPTPSLA). Residues 27–377 (GIDSGGQALP…LEPSGDVALY (351 aa)) lie on the Extracellular side of the membrane. An Ig-like domain is found at 48–145 (PHFLLEPEDA…SGTTKSRRAY (98 aa)). 9 cysteine pairs are disulfide-bonded: Cys69/Cys130, Cys81/Cys128, Cys174/Cys225, Cys258/Cys295, Cys262/Cys299, Cys273/Cys285, Cys314/Cys348, Cys318/Cys353, and Cys326/Cys338. The Ig-like C2-type domain maps to 153 to 242 (KNFDQEPLAK…KRRSTTATVI (90 aa)). A glycan (N-linked (GlcNAc...) asparagine) is linked at Asn222. TSP type-1 domains are found at residues 246-300 (NGGW…TVCP) and 302-354 (DGAW…GLCV). Residue Asn347 is glycosylated (N-linked (GlcNAc...) asparagine). Residues 378 to 398 (AGLVVAVFVVLAVLMAVGVIV) form a helical membrane-spanning segment. Topologically, residues 399–945 (YRRNCRDFDT…LVAMTTDGDC (547 aa)) are cytoplasmic. Residue Cys403 is the site of S-palmitoyl cysteine attachment. Positions 543–686 (SSVSGTFGCL…LGTYVFTGES (144 aa)) constitute a ZU5 domain. Tyr581 is subject to Phosphotyrosine. Residues 689–838 (RSAVKRLQLA…AETPAGSLDA (150 aa)) form a UPA domain region. The interval 707–725 (SLEYSLRVYCLEDTPAALK) is interaction with DCC. The Death domain occupies 865–943 (KICNSLDAPN…EMLVAMTTDG (79 aa)).

Belongs to the unc-5 family. As to quaternary structure, interacts with the cytoplasmic part of DCC. Interacts with GNAI2 via its cytoplasmic part. Interacts (via death domain) with DAPK1 (via death domain). Interacts (via extracellular domain) with FLRT3 (via extracellular domain); the interaction is direct. Interacts (via extracellular domain) with FLRT2 and FLRT3 (via extracellular domain), but has higher affinity for FLRT3. Identified in a complex with FLRT3 and ADGRL3; does not interact with ADGRL3 by itself. Phosphorylated on cytoplasmic tyrosine residues. Post-translationally, proteolytically cleaved by caspases during apoptosis. The cleavage does not take place when the receptor is associated with netrin ligand. Its cleavage by caspases is required to induce apoptosis. In terms of processing, palmitoylation is required for pro-apoptotic activity, but not for location at lipid rafts. In terms of tissue distribution, mainly expressed in regions of differentiating neurons. Expressed in the developing sensory ganglia that flank the spinal cord from E12, peaking at E14. Expressed in the roof plate region of the spinal cord from E14.

Its subcellular location is the cell membrane. It localises to the membrane raft. Its function is as follows. Receptor for netrin required for axon guidance. Mediates axon repulsion of neuronal growth cones in the developing nervous system upon ligand binding. Axon repulsion in growth cones may be caused by its association with DCC that may trigger signaling for repulsion. Functions as a netrin receptor that negatively regulates vascular branching during angiogenesis. Mediates retraction of tip cell filopodia on endothelial growth cones in response to netrin. It also acts as a dependence receptor required for apoptosis induction when not associated with netrin ligand. Mediates apoptosis by activating DAPK1. In the absence of NTN1, activates DAPK1 by reducing its autoinhibitory phosphorylation at Ser-308 thereby increasing its catalytic activity. The sequence is that of Netrin receptor UNC5B (Unc5b) from Rattus norvegicus (Rat).